A 562-amino-acid chain; its full sequence is NAD-dependent malic enzyme (562 aa).

Tyr101 functions as the Proton donor in the catalytic mechanism. Arg154 provides a ligand contact to NAD(+). Lys172 (proton acceptor) is an active-site residue. A divalent metal cation-binding residues include Glu243, Asp244, and Asp267. NAD(+)-binding residues include Asp267 and Asn415.

It belongs to the malic enzymes family. Homotetramer. It depends on Mg(2+) as a cofactor. The cofactor is Mn(2+).

The catalysed reaction is (S)-malate + NAD(+) = pyruvate + CO2 + NADH. It catalyses the reaction oxaloacetate + H(+) = pyruvate + CO2. The protein is NAD-dependent malic enzyme of Shewanella sp. (strain ANA-3).